A 920-amino-acid chain; its full sequence is 3-hydroxy-3-methylglutaryl-coenzyme A reductase (920 aa).

The helical transmembrane segment at 12-32 threads the bilayer; the sequence is FCASHPWEVIVALLTITACML. Asn-37 is a glycosylation site (N-linked (GlcNAc...) asparagine). Positions 62–85 are disordered; that stretch reads GAGSGASGTIPPSSMGGSATSSRH. The segment covering 71 to 82 has biased composition (polar residues); sequence IPPSSMGGSATS. Positions 106–263 constitute an SSD domain; the sequence is DVILMTIVRC…MTFYPACLSL (158 aa). 5 consecutive transmembrane segments (helical) span residues 107–129, 136–156, 170–190, 208–228, and 237–257; these read VILM…CSLH, VLGI…TAII, LFFL…QLAL, LLGP…GVGT, and VLCM…MTFY. N-linked (GlcNAc...) asparagine glycosylation is found at Asn-342 and Asn-346. A helical membrane pass occupies residues 364 to 384; it reads SADHIVISIVLIALVVKFICF. The segment at 385–498 is linker; the sequence is DNRDPLPDQL…EEIVSIVHAG (114 aa). N-linked (GlcNAc...) asparagine glycosylation is found at Asn-443 and Asn-475. The interval 499–829 is catalytic; the sequence is GTHCPLHKIE…TCTMPSLEVG (331 aa). Residues Glu-586, Lys-717, and Asp-793 each act as charge relay system in the active site. N-linked (GlcNAc...) asparagine glycans are attached at residues Asn-797 and Asn-802. Residue His-892 is the Proton donor of the active site. N-linked (GlcNAc...) asparagine glycans are attached at residues Asn-896 and Asn-910.

The protein belongs to the HMG-CoA reductase family. Highly expressed in embryonic gonadal mesoderm, where expression is initially broad, and then becomes restricted to a segmental pattern at stage 11. Expression is then further restricted to a cluster of cells in each of parasegments 10, 11 and 12, corresponding to the developing gonadal mesoderm. Not expressed in pole cells.

The protein resides in the endoplasmic reticulum membrane. It catalyses the reaction (R)-mevalonate + 2 NADP(+) + CoA = (3S)-3-hydroxy-3-methylglutaryl-CoA + 2 NADPH + 2 H(+). It participates in metabolic intermediate biosynthesis; (R)-mevalonate biosynthesis; (R)-mevalonate from acetyl-CoA: step 3/3. The activity of HMG-CoA-reductase is suppressed by exogenous mevalonate. Synthesis of mevalonate for the production of non-sterol isoprenoids, which are essential for growth differentiation. Provides spatial information during embryogenesis to guide migrating primordial germ cells (the pole cells) from the ectoderm to the mesoderm. Also required for association of the pole cells with the gonadal mesoderm. This chain is 3-hydroxy-3-methylglutaryl-coenzyme A reductase (Hmgcr), found in Drosophila melanogaster (Fruit fly).